The sequence spans 385 residues: FAD-dependent monooxygenase verC2 (385 aa).

Positions 27, 227, and 240 each coordinate FAD. The N-linked (GlcNAc...) asparagine glycan is linked to Asn-320. The chain crosses the membrane as a helical span at residues 365–385 (WKTTIMFIALLTIVVLIYSFI).

This sequence belongs to the paxM FAD-dependent monooxygenase family. It depends on FAD as a cofactor.

The protein resides in the membrane. The protein operates within secondary metabolite biosynthesis; terpenoid biosynthesis. Its pathway is mycotoxin biosynthesis. In terms of biological role, FAD-dependent monooxygenase; part of the gene cluster that mediates the biosynthesis of the neurotoxin verrucosidin, a methylated alpha-pyrone polyketide that inhibits oxidative phosphorylation in mitochondria and thereby causes neurological diseases. The carbon backbone of verrucosidin is synthesized by the HR-PKS verA, and further modified by the other verrucodidin cluster enzymes. This is FAD-dependent monooxygenase verC2 from Penicillium polonicum.